A 565-amino-acid chain; its full sequence is Methionine--tRNA ligase (565 aa).

The 'HIGH' region motif lies at 16 to 26 (PYAYGVPHLGN). Residues Cys148, Cys151, Cys161, and Cys164 each contribute to the Zn(2+) site. The short motif at 338–342 (KFSKS) is the 'KMSKS' region element. Lys341 provides a ligand contact to ATP.

Belongs to the class-I aminoacyl-tRNA synthetase family. MetG type 1 subfamily. Zn(2+) is required as a cofactor.

It is found in the cytoplasm. The catalysed reaction is tRNA(Met) + L-methionine + ATP = L-methionyl-tRNA(Met) + AMP + diphosphate. Is required not only for elongation of protein synthesis but also for the initiation of all mRNA translation through initiator tRNA(fMet) aminoacylation. This is Methionine--tRNA ligase from Thermofilum pendens (strain DSM 2475 / Hrk 5).